Reading from the N-terminus, the 190-residue chain is Ribose 1,5-bisphosphate phosphokinase PhnN (190 aa).

19–26 contributes to the ATP binding site; the sequence is GPSGVGKD.

It belongs to the ribose 1,5-bisphosphokinase family.

It catalyses the reaction alpha-D-ribose 1,5-bisphosphate + ATP = 5-phospho-alpha-D-ribose 1-diphosphate + ADP. Its pathway is metabolic intermediate biosynthesis; 5-phospho-alpha-D-ribose 1-diphosphate biosynthesis; 5-phospho-alpha-D-ribose 1-diphosphate from D-ribose 5-phosphate (route II): step 3/3. Catalyzes the phosphorylation of ribose 1,5-bisphosphate to 5-phospho-D-ribosyl alpha-1-diphosphate (PRPP). The sequence is that of Ribose 1,5-bisphosphate phosphokinase PhnN from Ruegeria sp. (strain TM1040) (Silicibacter sp.).